Here is a 288-residue protein sequence, read N- to C-terminus: 2-methoxy-6-polyprenyl-1,4-benzoquinol methylase, mitochondrial (288 aa).

Residues 1 to 27 (MALRSVSRRLGSRILNQRSFVASLHSH) constitute a mitochondrion transit peptide. Residues Thr94, Asp130, and 160 to 161 (DA) each bind S-adenosyl-L-methionine.

The protein belongs to the class I-like SAM-binding methyltransferase superfamily. MenG/UbiE family. Component of a multi-subunit COQ enzyme complex.

The protein resides in the mitochondrion inner membrane. It catalyses the reaction a 2-methoxy-6-(all-trans-polyprenyl)benzene-1,4-diol + S-adenosyl-L-methionine = a 5-methoxy-2-methyl-3-(all-trans-polyprenyl)benzene-1,4-diol + S-adenosyl-L-homocysteine + H(+). The protein operates within cofactor biosynthesis; ubiquinone biosynthesis. Methyltransferase required for the conversion of 2-polyprenyl-6-methoxy-1,4-benzoquinol (DDMQH2) to 2-polyprenyl-3-methyl-6-methoxy-1,4-benzoquinol (DMQH2). In Arabidopsis thaliana (Mouse-ear cress), this protein is 2-methoxy-6-polyprenyl-1,4-benzoquinol methylase, mitochondrial.